A 303-amino-acid polypeptide reads, in one-letter code: UDP-3-O-acyl-N-acetylglucosamine deacetylase (303 aa).

3 residues coordinate Zn(2+): histidine 78, histidine 237, and aspartate 241. Residue histidine 264 is the Proton donor of the active site.

This sequence belongs to the LpxC family. The cofactor is Zn(2+).

The catalysed reaction is a UDP-3-O-[(3R)-3-hydroxyacyl]-N-acetyl-alpha-D-glucosamine + H2O = a UDP-3-O-[(3R)-3-hydroxyacyl]-alpha-D-glucosamine + acetate. It functions in the pathway glycolipid biosynthesis; lipid IV(A) biosynthesis; lipid IV(A) from (3R)-3-hydroxytetradecanoyl-[acyl-carrier-protein] and UDP-N-acetyl-alpha-D-glucosamine: step 2/6. Functionally, catalyzes the hydrolysis of UDP-3-O-myristoyl-N-acetylglucosamine to form UDP-3-O-myristoylglucosamine and acetate, the committed step in lipid A biosynthesis. This is UDP-3-O-acyl-N-acetylglucosamine deacetylase from Pseudomonas paraeruginosa (strain DSM 24068 / PA7) (Pseudomonas aeruginosa (strain PA7)).